The primary structure comprises 125 residues: UPF0102 protein Rpic_3463 (125 aa).

Belongs to the UPF0102 family.

The polypeptide is UPF0102 protein Rpic_3463 (Ralstonia pickettii (strain 12J)).